The sequence spans 316 residues: Methionyl-tRNA formyltransferase (316 aa).

Residue 112-115 participates in (6S)-5,6,7,8-tetrahydrofolate binding; that stretch reads SLLP.

Belongs to the Fmt family.

The enzyme catalyses L-methionyl-tRNA(fMet) + (6R)-10-formyltetrahydrofolate = N-formyl-L-methionyl-tRNA(fMet) + (6S)-5,6,7,8-tetrahydrofolate + H(+). Its function is as follows. Attaches a formyl group to the free amino group of methionyl-tRNA(fMet). The formyl group appears to play a dual role in the initiator identity of N-formylmethionyl-tRNA by promoting its recognition by IF2 and preventing the misappropriation of this tRNA by the elongation apparatus. This is Methionyl-tRNA formyltransferase from Flavobacterium psychrophilum (strain ATCC 49511 / DSM 21280 / CIP 103535 / JIP02/86).